The sequence spans 294 residues: Acetyl-coenzyme A carboxylase carboxyl transferase subunit beta (294 aa).

The region spanning 29 to 294 is the CoA carboxyltransferase N-terminal domain; sequence LWEKCPECGQ…TQVVKLQTNA (266 aa). Positions 33, 36, 52, and 55 each coordinate Zn(2+). The C4-type zinc-finger motif lies at 33–55; sequence CPECGQVVYRKDLIDNCSVCSNC.

The protein belongs to the AccD/PCCB family. As to quaternary structure, acetyl-CoA carboxylase is a heterohexamer composed of biotin carboxyl carrier protein (AccB), biotin carboxylase (AccC) and two subunits each of ACCase subunit alpha (AccA) and ACCase subunit beta (AccD). Zn(2+) is required as a cofactor.

Its subcellular location is the cytoplasm. The catalysed reaction is N(6)-carboxybiotinyl-L-lysyl-[protein] + acetyl-CoA = N(6)-biotinyl-L-lysyl-[protein] + malonyl-CoA. The protein operates within lipid metabolism; malonyl-CoA biosynthesis; malonyl-CoA from acetyl-CoA: step 1/1. In terms of biological role, component of the acetyl coenzyme A carboxylase (ACC) complex. Biotin carboxylase (BC) catalyzes the carboxylation of biotin on its carrier protein (BCCP) and then the CO(2) group is transferred by the transcarboxylase to acetyl-CoA to form malonyl-CoA. In Prochlorococcus marinus (strain NATL2A), this protein is Acetyl-coenzyme A carboxylase carboxyl transferase subunit beta.